A 702-amino-acid chain; its full sequence is MRHKININNHIEIFDTDKVAKQAAGAVLMQEKNAVVLATVAREEKMVEEDFLPLTVQYIEKAYAAGKIPGGYVKRETKPGDSETLSARIIDRSLRPLFPKGYAYPTQIVVMVLSADPEVDLQVMSLNAASVALYLSDIPIKAPVCGVRIGRINNEFVLNPSNSELKNSTLDLYVAGVKDELLMIEMRALSNKKDNQHCMNELSEDDTLKALDFASSAILRGSNEYEKAFAAYRKNSKLEFKIESDNIQIIDYIKNTYITKLKIAINQMAKSERASEILQIAKEIESESMAIENEWKFEDIEKALHVCKRELVRNQIINENKRADGRGLKDVRKIDIETNILPSAHGSCLFTRGQTQALVVATLGNDNDAQMSDMLTEKNPICEKFMVNYNFPGFSVGEASPIKAPGRRELGHGNLAKRALYPSVDADYIHTIRLVSEILESNGSSSMATVCGGALALRAAGVKSEKLVAGVAMGLVFEEEKYAILTDIMGLEDHDGDMDFKVAGSHDGITALQMDIKLGGIEQKVLQEALYQAKEARGYILNLMQEACEKIIVNEAILPKVEIFNVDPNKIPDIIGQGGKTIKDIIEKFEVNIDLDRDKGEVKIAGIDHNLISQSKEYILNLLHSKGSNKRRDKKEMPKFDIGEEFLGRVQKVVEFGVFVELKEGVDGLLHNSKIKEKLEVGHEIKVKVAEIKNGKVSLDLA.

Residues aspartate 493 and aspartate 499 each coordinate Mg(2+). The region spanning proline 559 to isoleucine 619 is the KH domain. Residues glycine 643 to alanine 702 form the S1 motif domain.

Belongs to the polyribonucleotide nucleotidyltransferase family. It depends on Mg(2+) as a cofactor.

Its subcellular location is the cytoplasm. The enzyme catalyses RNA(n+1) + phosphate = RNA(n) + a ribonucleoside 5'-diphosphate. In terms of biological role, involved in mRNA degradation. Catalyzes the phosphorolysis of single-stranded polyribonucleotides processively in the 3'- to 5'-direction. In Campylobacter lari (strain RM2100 / D67 / ATCC BAA-1060), this protein is Polyribonucleotide nucleotidyltransferase.